We begin with the raw amino-acid sequence, 182 residues long: Translation initiation factor IF-3 (182 aa).

Residues 1-22 (MPLGDCNISTPDNKQNRKNQEI) form a disordered region.

It belongs to the IF-3 family. Monomer.

The protein localises to the cytoplasm. Its function is as follows. IF-3 binds to the 30S ribosomal subunit and shifts the equilibrium between 70S ribosomes and their 50S and 30S subunits in favor of the free subunits, thus enhancing the availability of 30S subunits on which protein synthesis initiation begins. The polypeptide is Translation initiation factor IF-3 (Xanthomonas campestris pv. campestris (strain ATCC 33913 / DSM 3586 / NCPPB 528 / LMG 568 / P 25)).